Consider the following 78-residue polypeptide: Large ribosomal subunit protein bL28 (78 aa).

It belongs to the bacterial ribosomal protein bL28 family.

The polypeptide is Large ribosomal subunit protein bL28 (Synechococcus sp. (strain WH7803)).